The primary structure comprises 333 residues: Alpha-N-acetylgalactosaminide alpha-2,6-sialyltransferase 6 (333 aa).

Residues 1-12 show a composition bias toward polar residues; sequence MACSRPPSQCDP. Positions 1 to 27 are disordered; the sequence is MACSRPPSQCDPTTLPPGPPAGRWPLP. Residues 1-43 lie on the Cytoplasmic side of the membrane; that stretch reads MACSRPPSQCDPTTLPPGPPAGRWPLPFSRRRREMSSNKEQRS. A helical; Signal-anchor for type II membrane protein membrane pass occupies residues 44–64; that stretch reads AVFVILFALITILILYSSNSA. At 65–333 the chain is on the lumenal side; sequence NEVFHYGSLR…GITFSHPSWT (269 aa). Residue Asn98 is glycosylated (N-linked (GlcNAc...) asparagine). Cysteines 108 and 256 form a disulfide.

Belongs to the glycosyltransferase 29 family. In terms of tissue distribution, widely expressed, the gene expression is most abundant in colon, brain, liver, and heart.

Its subcellular location is the golgi apparatus membrane. It catalyses the reaction a ganglioside GM1b (d18:1(4E)) + CMP-N-acetyl-beta-neuraminate = a ganglioside GD1alpha (d18:1(4E)) + CMP + H(+). The catalysed reaction is a ganglioside GD1a (d18:1(4E)) + CMP-N-acetyl-beta-neuraminate = a ganglioside GT1aalpha (d18:1(4E)) + CMP + H(+). The enzyme catalyses a ganglioside GT1b (d18:1(4E)) + CMP-N-acetyl-beta-neuraminate = a ganglioside GQ1balpha (d18:1(4E)) + CMP + H(+). It carries out the reaction N-acetyl-alpha-neuraminosyl-(2-&gt;3)-beta-D-galactosyl-(1-&gt;3)-N-acetyl-beta-D-glucosaminyl-(1-&gt;3)-beta-D-galactosyl-(1-&gt;4)-beta-D-glucosyl-(1&lt;-&gt;1')-N-acyl-sphing-4-enine + CMP-N-acetyl-beta-neuraminate = N-acetyl-alpha-neuraminosyl-(2-&gt;3)-beta-D-galactosyl-(1-&gt;3)-[N-acetyl-alpha-neuraminosyl-(2-&gt;6)]-N-acetyl-beta-D-glucosaminyl-(1-&gt;3)-beta-D-galactosyl-(1-&gt;4)-beta-D-glucosyl-(1&lt;-&gt;1')-N-acyl-sphing-4-enine + CMP + H(+). It catalyses the reaction a globoside MSGG + CMP-N-acetyl-beta-neuraminate = a globoside DSGG + CMP + H(+). The catalysed reaction is 3-O-[alpha-Neu5Ac-(2-&gt;3)-beta-D-Gal-(1-&gt;3)-alpha-D-GalNAc]-L-Ser-[protein] + CMP-N-acetyl-beta-neuraminate = a 3-O-{alpha-Neu5Ac-(2-&gt;3)-beta-D-Gal-(1-&gt;3)-[alpha-Neu5Ac-(2-&gt;6)]-alpha-D-GalNAc}-L-seryl-[protein] + CMP + H(+). The enzyme catalyses 3-O-[alpha-Neu5Ac-(2-&gt;3)-beta-D-Gal-(1-&gt;3)-alpha-D-GalNAc]-L-Thr-[protein] + CMP-N-acetyl-beta-neuraminate = a 3-O-{alpha-Neu5Ac-(2-&gt;3)-beta-D-Gal-(1-&gt;3)-[alpha-Neu5Ac-(2-&gt;6)]-alpha-D-GalNAc}-L-threonyl-[protein] + CMP + H(+). Transfers the sialyl group (N-acetyl-alpha-neuraminyl or NeuAc) from CMP-NeuAc onto glycolipids, forming an alpha-2,6-linkage. Produces branched type disialyl structures by transfer of a sialyl group onto the GalNAc or GlcNAc residue inside backbone core chains having a terminal sialic acid with an alpha-2,3-linkage on Gal. ST6GalNAcVI prefers glycolipids to glycoproteins, predominantly catalyzing the biosynthesis of ganglioside GD1alpha from GM1b. Also has activity toward GD1a and GT1b, and can generate DSGG (disialylgalactosylgloboside) from MSGG (monosialylgalactosylgloboside). Besides GMb1, MSGG and other glycolipids, it shows activity towards sialyl Lc4Cer generating disialyl Lc4Cer, which can lead to the synthesis of disialyl Lewis a (Le(a)), suggested to be a cancer-associated antigen. The polypeptide is Alpha-N-acetylgalactosaminide alpha-2,6-sialyltransferase 6 (St6galnac6) (Mus musculus (Mouse)).